Consider the following 1307-residue polypeptide: Rab3 GTPase-activating protein regulatory subunit (1307 aa).

The protein belongs to the Rab3-GAP regulatory subunit family. As to quaternary structure, the Rab3 GTPase-activating complex is a heterodimer composed of rbg-1 and rbg-2.

The protein localises to the cytoplasm. Functionally, probable regulatory subunit of a GTPase activating protein that has specificity for Rab3 subfamily. Rab3 proteins are involved in regulated exocytosis of neurotransmitters and hormones. Rab3 GTPase-activating complex specifically converts active Rab3-GTP to the inactive form Rab3-GDP. This is Rab3 GTPase-activating protein regulatory subunit (rbg-2) from Caenorhabditis elegans.